Consider the following 882-residue polypeptide: DNA mismatch repair protein MutS (882 aa).

Residue 656–663 (GPNASGKS) coordinates ATP.

This sequence belongs to the DNA mismatch repair MutS family.

Its function is as follows. This protein is involved in the repair of mismatches in DNA. It is possible that it carries out the mismatch recognition step. This protein has a weak ATPase activity. The polypeptide is DNA mismatch repair protein MutS (Synechococcus elongatus (strain ATCC 33912 / PCC 7942 / FACHB-805) (Anacystis nidulans R2)).